The sequence spans 145 residues: Alpha-amylase/trypsin inhibitor CM1 (145 aa).

The first 25 residues, 1-25, serve as a signal peptide directing secretion; the sequence is MASKSSISPLLLATVLVSVFAAATA.

Belongs to the protease inhibitor I6 (cereal trypsin/alpha-amylase inhibitor) family. Subunit of the tetrameric inhibitor. In terms of tissue distribution, endosperm.

Its subcellular location is the secreted. Functionally, alpha-amylase/trypsin inhibitor. It could be involved in insect defense mechanisms. This Triticum aestivum (Wheat) protein is Alpha-amylase/trypsin inhibitor CM1.